A 551-amino-acid chain; its full sequence is Glucans biosynthesis protein D (551 aa).

A signal peptide (tat-type signal) is located at residues 1 to 32; that stretch reads MDRRRFIKGSMAMAAVCGTSGIASLFSQAAFA.

This sequence belongs to the OpgD/OpgG family. Predicted to be exported by the Tat system. The position of the signal peptide cleavage has not been experimentally proven.

The protein resides in the periplasm. It functions in the pathway glycan metabolism; osmoregulated periplasmic glucan (OPG) biosynthesis. Its function is as follows. Probably involved in the control of the structural glucose backbone of osmoregulated periplasmic glucans (OPGs). In Escherichia coli O127:H6 (strain E2348/69 / EPEC), this protein is Glucans biosynthesis protein D.